Consider the following 129-residue polypeptide: Gem-associated protein 7 (129 aa).

Met1 is subject to N-acetylmethionine. The SUZ-C domain maps to Met1–Gly31. Residues Arg63 to Leu129 enclose the Sm domain.

Belongs to the gemin-7 family. As to quaternary structure, part of the core SMN complex that contains SMN1, GEMIN2/SIP1, DDX20/GEMIN3, GEMIN4, GEMIN5, GEMIN6, GEMIN7, GEMIN8 and STRAP/UNRIP. Part of the SMN-Sm complex that contains SMN1, GEMIN2/SIP1, DDX20/GEMIN3, GEMIN4, GEMIN5, GEMIN6, GEMIN7, GEMIN8, STRAP/UNRIP and the Sm proteins SNRPB, SNRPD1, SNRPD2, SNRPD3, SNRPE, SNRPF and SNRPG. Interacts with GEMIN6; the interaction is direct. Interacts with STRAP/UNRIP; the interaction is direct. Interacts with GEMIN8; the interaction is direct. Interacts with SNRPB, SNRPD2, SNRPD3 and SNRPE; the interaction is direct.

It localises to the nucleus. The protein resides in the nucleoplasm. It is found in the gem. Its subcellular location is the cytoplasm. Functionally, the SMN complex catalyzes the assembly of small nuclear ribonucleoproteins (snRNPs), the building blocks of the spliceosome, and thereby plays an important role in the splicing of cellular pre-mRNAs. Most spliceosomal snRNPs contain a common set of Sm proteins SNRPB, SNRPD1, SNRPD2, SNRPD3, SNRPE, SNRPF and SNRPG that assemble in a heptameric protein ring on the Sm site of the small nuclear RNA to form the core snRNP (Sm core). In the cytosol, the Sm proteins SNRPD1, SNRPD2, SNRPE, SNRPF and SNRPG are trapped in an inactive 6S pICln-Sm complex by the chaperone CLNS1A that controls the assembly of the core snRNP. To assemble core snRNPs, the SMN complex accepts the trapped 5Sm proteins from CLNS1A forming an intermediate. Binding of snRNA inside 5Sm triggers eviction of the SMN complex, thereby allowing binding of SNRPD3 and SNRPB to complete assembly of the core snRNP. The protein is Gem-associated protein 7 (Gemin7) of Mus musculus (Mouse).